Reading from the N-terminus, the 224-residue chain is MADS-box transcription factor 16 (224 aa).

The 61-residue stretch at 1–61 folds into the MADS-box domain; that stretch reads MGRGKIEIKR…GKYHEFCSPS (61 aa). Residues 84-174 form the K-box domain; sequence YENMQRTLSH…QQELGLREEP (91 aa).

In terms of assembly, may interact with the K-box of MADS4, MADS6 and MADS8. May form a heterodimer with MADS4. Expressed in lodicules, stamens and carpels.

It localises to the nucleus. Its function is as follows. Probable transcription factor involved in the development of floral organs. Required for normal development of lodicules and stamens (whorls 2 and 3). May function as a heterodimer with MADS4. This Oryza sativa subsp. japonica (Rice) protein is MADS-box transcription factor 16 (MADS16).